The chain runs to 85 residues: Toxin BmKaTX15 (85 aa).

The N-terminal stretch at Met-1–Ser-19 is a signal peptide. In terms of domain architecture, LCN-type CS-alpha/beta spans Arg-21–Asn-83. Disulfide bonds link Cys-31/Cys-82, Cys-35/Cys-55, Cys-41/Cys-65, and Cys-45/Cys-67.

Belongs to the long (4 C-C) scorpion toxin superfamily. Sodium channel inhibitor family. Alpha subfamily. As to expression, expressed by the venom gland.

It localises to the secreted. Its function is as follows. Alpha toxins bind voltage-independently at site-3 of sodium channels (Nav) and inhibit the inactivation of the activated channels, thereby blocking neuronal transmission. This Olivierus martensii (Manchurian scorpion) protein is Toxin BmKaTX15.